A 363-amino-acid chain; its full sequence is Putative glutamate--cysteine ligase 2 (363 aa).

This sequence belongs to the glutamate--cysteine ligase type 2 family. YbdK subfamily.

It catalyses the reaction L-cysteine + L-glutamate + ATP = gamma-L-glutamyl-L-cysteine + ADP + phosphate + H(+). Its function is as follows. ATP-dependent carboxylate-amine ligase which exhibits weak glutamate--cysteine ligase activity. The chain is Putative glutamate--cysteine ligase 2 from Streptomyces coelicolor (strain ATCC BAA-471 / A3(2) / M145).